The primary structure comprises 486 residues: Wax ester synthase/diacylglycerol acyltransferase 11 (486 aa).

Topologically, residues 1 to 192 are cytoplasmic; it reads MGEDKKTARE…CNSGFFNKIW (192 aa). Catalysis depends on H144, which acts as the Proton acceptor. A helical membrane pass occupies residues 193–213; sequence WLFVGLWFILRLLFNTFVDIL. The Extracellular portion of the chain corresponds to 214 to 486; the sequence is MFALTIFVLR…LERGLYEIEV (273 aa).

It in the N-terminal section; belongs to the long-chain O-acyltransferase family. Mostly expressed in inflorescences and flowers, especially at the periphery of petal epidermal cells.

The protein resides in the cell membrane. Its subcellular location is the endoplasmic reticulum membrane. It catalyses the reaction an acyl-CoA + a 1,2-diacyl-sn-glycerol = a triacyl-sn-glycerol + CoA. The catalysed reaction is a long chain fatty alcohol + a fatty acyl-CoA = a wax ester + CoA. The protein operates within glycerolipid metabolism; triacylglycerol biosynthesis. Its pathway is lipid metabolism. In terms of biological role, bifunctional wax ester synthase/diacylglycerol acyltransferase. Involved in cuticular wax biosynthesis. Required for petals development, probably by mediating the production of fatty acids at the plasma membrane in the petal epidermis acting as lubricants that makes petal elongation smooth in narrow space between the sepals and the anthers inside floral buds. This is Wax ester synthase/diacylglycerol acyltransferase 11 from Arabidopsis thaliana (Mouse-ear cress).